Here is a 161-residue protein sequence, read N- to C-terminus: Transcription antitermination protein NusB (161 aa).

The protein belongs to the NusB family.

Functionally, involved in transcription antitermination. Required for transcription of ribosomal RNA (rRNA) genes. Binds specifically to the boxA antiterminator sequence of the ribosomal RNA (rrn) operons. The polypeptide is Transcription antitermination protein NusB (Syntrophus aciditrophicus (strain SB)).